The following is a 130-amino-acid chain: DNA-directed RNA polymerase subunit omega (130 aa).

Disordered regions lie at residues 79–98 (EPEP…VDAD) and 109–130 (EEEL…EEDE).

It belongs to the RNA polymerase subunit omega family. In terms of assembly, the RNAP catalytic core consists of 2 alpha, 1 beta, 1 beta' and 1 omega subunit. When a sigma factor is associated with the core the holoenzyme is formed, which can initiate transcription.

The catalysed reaction is RNA(n) + a ribonucleoside 5'-triphosphate = RNA(n+1) + diphosphate. Its function is as follows. Promotes RNA polymerase assembly. Latches the N- and C-terminal regions of the beta' subunit thereby facilitating its interaction with the beta and alpha subunits. This chain is DNA-directed RNA polymerase subunit omega (rpoZ), found in Bradyrhizobium diazoefficiens (strain JCM 10833 / BCRC 13528 / IAM 13628 / NBRC 14792 / USDA 110).